The primary structure comprises 67 residues: LPS-assembly lipoprotein LptM (67 aa).

An N-terminal signal peptide occupies residues 1 to 19 (MKNVFKTLAVLLTLFSLTG). A lipid anchor (N-palmitoyl cysteine) is attached at Cys-20. Cys-20 is lipidated: S-diacylglycerol cysteine. Residues 26–67 (LYFPPADKNAPPPTKKVDSQTQSTMPDKNDRATGDGPSQVNY) are disordered.

The protein belongs to the LptM family. Interacts with the outer membrane embedded portion of the LPS translocon formed by LptD and LptE (LptDE).

The protein resides in the cell outer membrane. In terms of biological role, component of the lipopolysaccharide (LPS) transport (Lpt) pathway that promotes efficient assembly of the outer membrane LPS translocon (LptDE) by the BAM complex. Facilitates oxidative maturation of LptD by stabilizing a conformation of the LPS translocon in which LptD can efficiently acquire native disulfide bonds, thereby activating the LPS translocon. This is LPS-assembly lipoprotein LptM from Salmonella typhi.